A 512-amino-acid polypeptide reads, in one-letter code: GMP synthase [glutamine-hydrolyzing] (512 aa).

One can recognise a Glutamine amidotransferase type-1 domain in the interval T7 to G197. Catalysis depends on C84, which acts as the Nucleophile. Residues H171 and E173 contribute to the active site. A GMPS ATP-PPase domain is found at W198–R387. S225–S231 is a binding site for ATP.

Homodimer.

It catalyses the reaction XMP + L-glutamine + ATP + H2O = GMP + L-glutamate + AMP + diphosphate + 2 H(+). It participates in purine metabolism; GMP biosynthesis; GMP from XMP (L-Gln route): step 1/1. Functionally, catalyzes the synthesis of GMP from XMP. This Bacillus anthracis protein is GMP synthase [glutamine-hydrolyzing].